We begin with the raw amino-acid sequence, 476 residues long: Vitamin D-binding protein (476 aa).

The signal sequence occupies residues methionine 1–alanine 16. 3 Albumin domains span residues leucine 17–histidine 208, leucine 209–arginine 394, and glutamine 395–serine 476. Intrachain disulfides connect cysteine 29–cysteine 75, cysteine 74–cysteine 83, cysteine 96–cysteine 112, cysteine 111–cysteine 122, cysteine 145–cysteine 190, cysteine 189–cysteine 198, cysteine 220–cysteine 266, cysteine 265–cysteine 273, cysteine 286–cysteine 300, cysteine 299–cysteine 311, cysteine 335–cysteine 376, cysteine 375–cysteine 384, cysteine 407–cysteine 453, and cysteine 452–cysteine 462. An N-linked (GlcNAc...) asparagine glycan is attached at asparagine 288. Serine 434 is subject to Phosphoserine.

The protein belongs to the ALB/AFP/VDB family. As to quaternary structure, associates with membrane-bound immunoglobulin on the surface of B-lymphocytes and with IgG Fc receptor on the membranes of T-lymphocytes. Interacts with LRP2; the interaction is required for renal uptake of GC in complex with 25-hydroxyvitamin D3.

Its subcellular location is the secreted. Involved in vitamin D transport and storage, scavenging of extracellular G-actin, enhancement of the chemotactic activity of C5 alpha for neutrophils in inflammation and macrophage activation. This Mus musculus (Mouse) protein is Vitamin D-binding protein (Gc).